Reading from the N-terminus, the 202-residue chain is Urease accessory protein UreG (202 aa).

13–20 (GPVGAGKT) contributes to the GTP binding site.

It belongs to the SIMIBI class G3E GTPase family. UreG subfamily. Homodimer. UreD, UreF and UreG form a complex that acts as a GTP-hydrolysis-dependent molecular chaperone, activating the urease apoprotein by helping to assemble the nickel containing metallocenter of UreC. The UreE protein probably delivers the nickel.

The protein resides in the cytoplasm. Facilitates the functional incorporation of the urease nickel metallocenter. This process requires GTP hydrolysis, probably effectuated by UreG. This chain is Urease accessory protein UreG, found in Dinoroseobacter shibae (strain DSM 16493 / NCIMB 14021 / DFL 12).